The primary structure comprises 293 residues: Succinate--CoA ligase [ADP-forming] subunit alpha (293 aa).

CoA contacts are provided by residues 21-24, Lys47, and 99-101; these read TGKQ and ITE. Tyr162 is a substrate binding site. Residue His249 is the Tele-phosphohistidine intermediate of the active site.

The protein belongs to the succinate/malate CoA ligase alpha subunit family. In terms of assembly, heterotetramer of two alpha and two beta subunits.

The catalysed reaction is succinate + ATP + CoA = succinyl-CoA + ADP + phosphate. The enzyme catalyses GTP + succinate + CoA = succinyl-CoA + GDP + phosphate. The protein operates within carbohydrate metabolism; tricarboxylic acid cycle; succinate from succinyl-CoA (ligase route): step 1/1. Functionally, succinyl-CoA synthetase functions in the citric acid cycle (TCA), coupling the hydrolysis of succinyl-CoA to the synthesis of either ATP or GTP and thus represents the only step of substrate-level phosphorylation in the TCA. The alpha subunit of the enzyme binds the substrates coenzyme A and phosphate, while succinate binding and nucleotide specificity is provided by the beta subunit. This is Succinate--CoA ligase [ADP-forming] subunit alpha from Methanothermobacter thermautotrophicus (strain ATCC 29096 / DSM 1053 / JCM 10044 / NBRC 100330 / Delta H) (Methanobacterium thermoautotrophicum).